Consider the following 124-residue polypeptide: Small ribosomal subunit protein uS12 (124 aa).

Residue D89 is modified to 3-methylthioaspartic acid. Residues 105–124 (QGVKNRKQARSKYGAKMEKK) form a disordered region.

Belongs to the universal ribosomal protein uS12 family. In terms of assembly, part of the 30S ribosomal subunit. Contacts proteins S8 and S17. May interact with IF1 in the 30S initiation complex.

With S4 and S5 plays an important role in translational accuracy. Functionally, interacts with and stabilizes bases of the 16S rRNA that are involved in tRNA selection in the A site and with the mRNA backbone. Located at the interface of the 30S and 50S subunits, it traverses the body of the 30S subunit contacting proteins on the other side and probably holding the rRNA structure together. The combined cluster of proteins S8, S12 and S17 appears to hold together the shoulder and platform of the 30S subunit. This chain is Small ribosomal subunit protein uS12, found in Renibacterium salmoninarum (strain ATCC 33209 / DSM 20767 / JCM 11484 / NBRC 15589 / NCIMB 2235).